Consider the following 68-residue polypeptide: Ribosome modulation factor (68 aa).

This sequence belongs to the ribosome modulation factor family.

The protein localises to the cytoplasm. During stationary phase, converts 70S ribosomes to an inactive dimeric form (100S ribosomes). The chain is Ribosome modulation factor from Saccharophagus degradans (strain 2-40 / ATCC 43961 / DSM 17024).